We begin with the raw amino-acid sequence, 488 residues long: UDP-N-acetylmuramate--L-alanine ligase (488 aa).

122–128 lines the ATP pocket; sequence GTHGKTT.

Belongs to the MurCDEF family.

It localises to the cytoplasm. The enzyme catalyses UDP-N-acetyl-alpha-D-muramate + L-alanine + ATP = UDP-N-acetyl-alpha-D-muramoyl-L-alanine + ADP + phosphate + H(+). The protein operates within cell wall biogenesis; peptidoglycan biosynthesis. In terms of biological role, cell wall formation. The sequence is that of UDP-N-acetylmuramate--L-alanine ligase from Mycobacterium ulcerans (strain Agy99).